The following is a 517-amino-acid chain: GMP synthase [glutamine-hydrolyzing] (517 aa).

Positions R9–L199 constitute a Glutamine amidotransferase type-1 domain. Catalysis depends on C86, which acts as the Nucleophile. Catalysis depends on residues H173 and E175. A GMPS ATP-PPase domain is found at W200 to R392. S227–S233 provides a ligand contact to ATP.

As to quaternary structure, homodimer.

It carries out the reaction XMP + L-glutamine + ATP + H2O = GMP + L-glutamate + AMP + diphosphate + 2 H(+). Its pathway is purine metabolism; GMP biosynthesis; GMP from XMP (L-Gln route): step 1/1. Functionally, catalyzes the synthesis of GMP from XMP. This is GMP synthase [glutamine-hydrolyzing] from Vibrio parahaemolyticus serotype O3:K6 (strain RIMD 2210633).